The primary structure comprises 280 residues: Large ribosomal subunit protein uL2 (280 aa).

The segment at 226–280 (NPIDHPHGGGEGRTSGGRHPVTPWGKPTKGAKTRNKKKASSQLIIRSRHAKKKGR) is disordered. Composition is skewed to basic residues over residues 254–264 (KGAKTRNKKKA) and 271–280 (RSRHAKKKGR).

This sequence belongs to the universal ribosomal protein uL2 family. In terms of assembly, part of the 50S ribosomal subunit. Forms a bridge to the 30S subunit in the 70S ribosome.

Its function is as follows. One of the primary rRNA binding proteins. Required for association of the 30S and 50S subunits to form the 70S ribosome, for tRNA binding and peptide bond formation. It has been suggested to have peptidyltransferase activity; this is somewhat controversial. Makes several contacts with the 16S rRNA in the 70S ribosome. This Roseobacter denitrificans (strain ATCC 33942 / OCh 114) (Erythrobacter sp. (strain OCh 114)) protein is Large ribosomal subunit protein uL2.